Here is a 482-residue protein sequence, read N- to C-terminus: Auxin transporter-like protein 4 (482 aa).

The Cytoplasmic portion of the chain corresponds to 1 to 59 (MLSQNQAEEAIVTNMNETEQEGGSSLEEIAEDQSMFNFKSFLWHGGSVWDAWFSCASNQ). A helical membrane pass occupies residues 60–77 (VAQVLLTLPYSFSQLGMV). The Extracellular portion of the chain corresponds to 78-79 (SG). Residues 80–100 (IVFQIFYGLIGSWTAYLISVL) traverse the membrane as a helical segment. Residues 101–135 (YVEYRARKEKENVNFKNHVIQWFEVLDGLLGRYWK) lie on the Cytoplasmic side of the membrane. Residues 136-156 (ALGLAFNCTFLLFGSVIQLIA) form a helical membrane-spanning segment. The Extracellular portion of the chain corresponds to 157–172 (CASNIYYINDKLDKRT). A helical membrane pass occupies residues 173–193 (WTYIFGACCATTVFIPSFHNY). Residues 194 to 196 (RIW) are Cytoplasmic-facing. A helical transmembrane segment spans residues 197–217 (SFLGLGMTTYTAWYMAIAAIV). Residues 218-232 (NGQIENVVHSGPTKL) are Extracellular-facing. A helical membrane pass occupies residues 233-253 (VLYFTGATNILYTFGGHAVTV). Residues 254–266 (EIMHAMWKPQKFK) are Cytoplasmic-facing. Residues 267 to 287 (YIYFLATLYVFTLTIPSAVAV) traverse the membrane as a helical segment. Topologically, residues 288–314 (YWAFGDELLNHSNAFSLLPKNGFRDAA) are extracellular. N297 carries an N-linked (GlcNAc...) asparagine glycan. Residues 315-335 (VILMLIHQFITFGFACTPLYF) form a helical membrane-spanning segment. Residues 336–356 (VWEKVIGMHDTKSICLRALVR) are Cytoplasmic-facing. A helical membrane pass occupies residues 357–377 (LPVVIPIWFLAIIFPFFGPIN). Position 378 (S378) is a topological domain, extracellular. Residues 379-399 (AVGALLVTFTVYIIPALAHML) form a helical membrane-spanning segment. The Cytoplasmic segment spans residues 400 to 422 (TYRTASARKNAVEKPPSFLPSWT). A helical transmembrane segment spans residues 423–443 (AVYVLNAFIVVWVLVVGFGFG). Residues 444–482 (GWASMTNFIRQIDTFGLFAKCYQCKPPTPPQAPSPHARH) are Extracellular-facing.

This sequence belongs to the amino acid/polyamine transporter 2 family. Amino acid/auxin permease (AAAP) (TC 2.A.18.1) subfamily. Shoots and roots of nodulating plants, at low levels.

The protein localises to the cell membrane. Carrier protein involved in proton-driven auxin influx. Mediates the formation of auxin gradient from developing leaves (site of auxin biosynthesis) to tips by contributing to the loading of auxin in vascular tissues and facilitating acropetal (base to tip) auxin transport within inner tissues of the root apex, and basipetal (tip to base) auxin transport within outer tissues of the root apex. May be involved in lateral roots and nodules formation. The polypeptide is Auxin transporter-like protein 4 (LAX4) (Medicago truncatula (Barrel medic)).